A 500-amino-acid chain; its full sequence is Lysine--tRNA ligase (500 aa).

Positions 411 and 418 each coordinate Mg(2+).

Belongs to the class-II aminoacyl-tRNA synthetase family. In terms of assembly, homodimer. It depends on Mg(2+) as a cofactor.

The protein resides in the cytoplasm. It catalyses the reaction tRNA(Lys) + L-lysine + ATP = L-lysyl-tRNA(Lys) + AMP + diphosphate. This is Lysine--tRNA ligase from Actinobacillus pleuropneumoniae serotype 5b (strain L20).